A 103-amino-acid polypeptide reads, in one-letter code: Nucleoid-associated protein Adeh_3636 (103 aa).

The protein belongs to the YbaB/EbfC family. Homodimer.

It is found in the cytoplasm. The protein resides in the nucleoid. Its function is as follows. Binds to DNA and alters its conformation. May be involved in regulation of gene expression, nucleoid organization and DNA protection. The protein is Nucleoid-associated protein Adeh_3636 of Anaeromyxobacter dehalogenans (strain 2CP-C).